The chain runs to 384 residues: Putative ankyrin repeat protein L72 (384 aa).

7 ANK repeats span residues 88–117 (ADMC…NIKN), 119–146 (GNLL…KEFS), 171–200 (DHNV…ILSV), 202–231 (DDSL…DIES), 233–261 (NNYC…NPNN), 298–324 (ILYQ…AGIK), and 325–357 (PTNS…DINV).

The protein is Putative ankyrin repeat protein L72 of Acanthamoeba polyphaga (Amoeba).